The primary structure comprises 472 residues: Coronin-6 (472 aa).

5 WD repeats span residues 79 to 119 (GHTG…PVRN), 129 to 169 (GHSK…VLLS), 173 to 212 (IHPDVIHSVCWNSNGSLLATTCKDKTLRIIDPRKSQVVAE), 216 to 259 (AHEG…EPVA), and 264 to 304 (DTSN…PFVH). A disordered region spans residues 409–434 (NILDVRPPASPRRSQSASEAPLSQQH). The span at 419–429 (PRRSQSASEAP) shows a compositional bias: low complexity. The stretch at 430-469 (LSQQHTLETLLEEMKALRERVQAQEERITALENMLCELVD) forms a coiled coil.

The chain is Coronin-6 (Coro6) from Rattus norvegicus (Rat).